Consider the following 409-residue polypeptide: Histone deacetylase 7 (409 aa).

The interval 11 to 324 (RVSYFYEPMI…WCYETAIAVG (314 aa)) is histone deacetylase. His148 functions as the Proton donor/acceptor in the catalytic mechanism. Zn(2+) is bound at residue Asp267. The segment at 383–409 (PFQDTPSSSQATEAAEVDMEKRNDPRI) is disordered. Positions 384–394 (FQDTPSSSQAT) are enriched in polar residues. Basic and acidic residues predominate over residues 400-409 (DMEKRNDPRI).

This sequence belongs to the histone deacetylase family. HD type 1 subfamily. Requires Zn(2+) as cofactor. In terms of tissue distribution, low expression in flowers.

It localises to the nucleus. It carries out the reaction N(6)-acetyl-L-lysyl-[histone] + H2O = L-lysyl-[histone] + acetate. In terms of biological role, responsible for the deacetylation of lysine residues on the N-terminal part of the core histones (H2A, H2B, H3 and H4). Histone deacetylation gives a tag for epigenetic repression and plays an important role in transcriptional regulation, cell cycle progression and developmental events. May be involved in flowering induction. Histone deacetylases act via the formation of large multiprotein complexes. This Arabidopsis thaliana (Mouse-ear cress) protein is Histone deacetylase 7 (HDA7).